Here is a 400-residue protein sequence, read N- to C-terminus: Enoyl-[acyl-carrier-protein] reductase [NADH] (400 aa).

NAD(+) is bound by residues 74-75, 111-112, and 139-140; these read FE, DA, and VA. Tyr-225 contributes to the substrate binding site. Residue Tyr-235 is the Proton donor of the active site. NAD(+) is bound by residues Lys-244 and 273 to 275; that span reads VVT.

Belongs to the TER reductase family. In terms of assembly, monomer.

It carries out the reaction a 2,3-saturated acyl-[ACP] + NAD(+) = a (2E)-enoyl-[ACP] + NADH + H(+). The protein operates within lipid metabolism; fatty acid biosynthesis. Functionally, involved in the final reduction of the elongation cycle of fatty acid synthesis (FAS II). Catalyzes the reduction of a carbon-carbon double bond in an enoyl moiety that is covalently linked to an acyl carrier protein (ACP). This is Enoyl-[acyl-carrier-protein] reductase [NADH] from Psychromonas ingrahamii (strain DSM 17664 / CCUG 51855 / 37).